The primary structure comprises 138 residues: Large ribosomal subunit protein uL16c (138 aa).

This sequence belongs to the universal ribosomal protein uL16 family. In terms of assembly, part of the 50S ribosomal subunit.

The protein localises to the plastid. Its subcellular location is the chloroplast. In Physcomitrium patens (Spreading-leaved earth moss), this protein is Large ribosomal subunit protein uL16c.